We begin with the raw amino-acid sequence, 1851 residues long: Voltage-dependent calcium channel type A subunit alpha-1 (1851 aa).

The Cytoplasmic portion of the chain corresponds to 1–38; it reads MGGPKKEENPPGGGPTSLFILTEDNPIRKYTRFIIEWP. The stretch at 25–316 is one I repeat; sequence NPIRKYTRFI…LVLGVLSGEF (292 aa). A helical membrane pass occupies residues 39-57; sequence PFEYAVLLTIIANCVVLAL. At 58–75 the chain is on the extracellular side; that stretch reads EEHLPGGDKTVLAQKLEK. The helical transmembrane segment at 76–95 threads the bilayer; that stretch reads TEAYFLCIFCVEASLKILAL. Over 96–107 the chain is Cytoplasmic; that stretch reads GLVLHKHSYLRN. The helical transmembrane segment at 108-128 threads the bilayer; the sequence is IWNIMDFFVVVTGFMTQYPQI. Over 129–133 the chain is Extracellular; sequence GPEVD. Residues 134 to 152 form a helical membrane-spanning segment; that stretch reads LRTLRAIRVLRPLKLVSGI. The Cytoplasmic portion of the chain corresponds to 153-171; the sequence is PSLQVVLKSIIKAMAPLLQ. The chain crosses the membrane as a helical span at residues 172 to 191; the sequence is IGLLVLFAIVIFAIIGLEFY. Over 192–288 the chain is Extracellular; the sequence is SGALHKTCYS…WTNDALGSAF (97 aa). Residues N234 and N235 are each glycosylated (N-linked (GlcNAc...) asparagine). The helical transmembrane segment at 289–313 threads the bilayer; that stretch reads NWIYFVPLIVIGSFFMLNLVLGVLS. The Cytoplasmic portion of the chain corresponds to 314 to 441; it reads GEFSNERNRV…FWIRHTVKTQ (128 aa). A disordered region spans residues 381–417; sequence RKKLKSLGKSKSTDTEEEEAEEDYGDDGYLKTRSKPQ. The segment covering 395-406 has biased composition (acidic residues); that stretch reads TEEEEAEEDYGD. The stretch at 427-670 is one II repeat; sequence EKRFRFWIRH…VFLAIAVDNL (244 aa). Residues 442-460 traverse the membrane as a helical segment; sequence WFYWFVIVLVFLNTVCVAV. The Extracellular segment spans residues 461–475; it reads EHYGQPSFLTEFLYY. The helical transmembrane segment at 476 to 495 threads the bilayer; the sequence is AEFIFLGLFMSEMFIKMYAL. The Cytoplasmic segment spans residues 496-503; the sequence is GPRIYFES. Residues 504-522 form a helical membrane-spanning segment; that stretch reads SFNRFDCVVISGSIFEVIW. The Extracellular portion of the chain corresponds to 523-531; that stretch reads SEVKGGSFG. The chain crosses the membrane as a helical span at residues 532–550; the sequence is LSVLRALRLLRIFKVTKYW. The Cytoplasmic portion of the chain corresponds to 551-569; it reads SSLRNLVISLLNSMRSIIS. A helical transmembrane segment spans residues 570–589; that stretch reads LLFLLFLFILIFALLGMQLF. Over 590 to 642 the chain is Extracellular; the sequence is GGQFNLPGGTPETNFNTFPIALLTVFQILTGEDWNEVMYQGIISQGGAQKGMI. Residues 643-667 traverse the membrane as a helical segment; the sequence is YSIYFIVLVLFGNYTLLNVFLAIAV. The Cytoplasmic portion of the chain corresponds to 668-767; that stretch reads DNLANAQELT…IRRGAHWVVN (100 aa). A disordered region spans residues 710-741; that stretch reads ENGDGAVAPSKSKGKKKEEEKKEEEEVTEGPK. The stretch at 762–1049 is one III repeat; the sequence is AHWVVNLPYF…IITFQEQGEA (288 aa). The chain crosses the membrane as a helical span at residues 768 to 786; the sequence is LPYFDFFIMVVISMSSIAL. At 787–802 the chain is on the extracellular side; that stretch reads AAEDPVRENSRRNKIL. The chain crosses the membrane as a helical span at residues 803-822; sequence NYFDYAFTGVFTIEMLLKIV. Topologically, residues 823-834 are cytoplasmic; the sequence is DLGVILHPGSYL. The helical transmembrane segment at 835–853 threads the bilayer; the sequence is REFWNIMDAVVVICAAVSF. The Extracellular portion of the chain corresponds to 854 to 866; sequence GFDMSGSSAGQNL. An N-linked (GlcNAc...) asparagine glycan is attached at N865. Residues 867–885 traverse the membrane as a helical segment; it reads STIKSLRVLRVLRPLKTIK. The Cytoplasmic segment spans residues 886 to 904; sequence RVPKLKAVFDCVVNSLKNV. The chain crosses the membrane as a helical span at residues 905 to 924; that stretch reads VNILIVYILFQFIFSVIGVQ. Topologically, residues 925–1013 are extracellular; that stretch reads LFNGKFFYCT…EDRGPIQNFR (89 aa). A helical membrane pass occupies residues 1014-1038; that stretch reads IEMSIFYIVYFIVFPFFFVNIFVAL. Residues 1039 to 1093 are Cytoplasmic-facing; the sequence is IIITFQEQGEAELQDGEIDKNQKSCIDFTIGARPLERYMPKNRNTFKYKVWRIVV. The IV repeat unit spans residues 1086–1347; it reads YKVWRIVVST…DNFDYLTRDS (262 aa). The chain crosses the membrane as a helical span at residues 1094–1122; that stretch reads STPFEYFIMMLIVFNTLLLMMKYHNQGDM. The Extracellular portion of the chain corresponds to 1123–1127; that stretch reads YEKSL. Residues 1128-1147 traverse the membrane as a helical segment; the sequence is KYINMGFTGMFSVETVLKII. At 1148 to 1155 the chain is on the cytoplasmic side; the sequence is GFGVKNFF. A helical transmembrane segment spans residues 1156–1174; it reads KDPWNIFDLITVLGSIVDA. Topologically, residues 1175–1184 are extracellular; that stretch reads LWMEFGHDDS. Residues 1185 to 1203 traverse the membrane as a helical segment; it reads NSINVGFLRLFRAARLIKL. Residues 1204 to 1222 are Cytoplasmic-facing; the sequence is LRQGYTIRILLWTFVQSFK. The helical transmembrane segment at 1223–1242 threads the bilayer; the sequence is ALPYVCLLIAMLFFIYAIIG. The Extracellular portion of the chain corresponds to 1243 to 1308; the sequence is MQVFGNIKLG…DAEKAPGEYC (66 aa). Residues 1306 to 1348 are phenylalkylamine binding; that stretch reads EYCGSTLAYAYFVSFIFFCSFLMLNLFVAVIMDNFDYLTRDSS. A helical membrane pass occupies residues 1309–1333; it reads GSTLAYAYFVSFIFFCSFLMLNLFV. Topologically, residues 1334 to 1851 are cytoplasmic; that stretch reads AVIMDNFDYL…HSDSDEEDWC (518 aa). The 36-residue stretch at 1353–1388 folds into the EF-hand domain; the sequence is HHLDEFVRIWAEYDPNATGKIHYTEMYDMLKNMDPP. Ca(2+) is bound by residues D1366, N1368, T1370, K1372, and E1377. Disordered regions lie at residues 1513 to 1572, 1588 to 1653, 1685 to 1764, and 1823 to 1851; these read DASR…HHDI, TRHP…SPAR, RAGI…DRDR, and VLPS…EDWC. The segment covering 1589-1600 has biased composition (basic residues); sequence RHPRHGNSHPRY. Residues 1604–1619 are compositionally biased toward low complexity; that stretch reads SWSASTSPARSPSPSR. Polar residues-rich tracts occupy residues 1637–1649 and 1698–1710; these read YGTT…SRSP and KPST…TNIN. The span at 1734 to 1764 shows a compositional bias: basic and acidic residues; sequence HHRDLLRDPRDMYYSSRERERDRERLRDRDR.

Belongs to the calcium channel alpha-1 subunit (TC 1.A.1.11) family. As to expression, expressed widely in the embryonic nervous system.

The protein localises to the membrane. Voltage-sensitive calcium channels (VSCC) mediate the entry of calcium ions into excitable cells and are also involved in a variety of calcium-dependent processes, including muscle contraction, neurotransmitter release, gene expression, cell motility, cell division and cell death. Probably encodes a dihydropyridine-insensitive current. Vital for survival to adulthood. The sequence is that of Voltage-dependent calcium channel type A subunit alpha-1 (cac) from Drosophila melanogaster (Fruit fly).